The primary structure comprises 201 residues: Pyrrolidone-carboxylate peptidase (201 aa).

Active-site residues include E81, C143, and H168.

The protein belongs to the peptidase C15 family. In terms of assembly, homotetramer.

It localises to the cytoplasm. It catalyses the reaction Release of an N-terminal pyroglutamyl group from a polypeptide, the second amino acid generally not being Pro.. Its function is as follows. Removes 5-oxoproline from various penultimate amino acid residues except L-proline. The sequence is that of Pyrrolidone-carboxylate peptidase (pcp) from Halalkalibacterium halodurans (strain ATCC BAA-125 / DSM 18197 / FERM 7344 / JCM 9153 / C-125) (Bacillus halodurans).